We begin with the raw amino-acid sequence, 91 residues long: MPLHKSAEKRLRQSDRKNARNRARKKELKVLVKNMQKLVDAGAPKPEVEVAYRSAVQKLDRLGVKNYIHANKASRKKSQLARILNEYGKAE.

Positions 1-18 (MPLHKSAEKRLRQSDRKN) are enriched in basic and acidic residues. A disordered region spans residues 1-25 (MPLHKSAEKRLRQSDRKNARNRARK).

Belongs to the bacterial ribosomal protein bS20 family.

Its function is as follows. Binds directly to 16S ribosomal RNA. This chain is Small ribosomal subunit protein bS20, found in Chlorobium phaeovibrioides (strain DSM 265 / 1930) (Prosthecochloris vibrioformis (strain DSM 265)).